A 489-amino-acid chain; its full sequence is Rhamnulokinase (489 aa).

13-17 (ASSGR) provides a ligand contact to ATP. Cys-68 and Cys-222 are joined by a disulfide. Residues Gly-83 and 236-238 (HDT) each bind substrate. Asp-237 functions as the Proton acceptor in the catalytic mechanism. Thr-259 contacts ATP. Asn-296 is a substrate binding site. Position 304 (Gln-304) interacts with ATP. An intrachain disulfide couples Cys-353 to Cys-370. Gly-402 is a binding site for ATP. The cysteines at positions 413 and 417 are disulfide-linked.

It belongs to the rhamnulokinase family. Monomer. Requires Mg(2+) as cofactor.

The enzyme catalyses L-rhamnulose + ATP = L-rhamnulose 1-phosphate + ADP + H(+). It functions in the pathway carbohydrate degradation; L-rhamnose degradation; glycerone phosphate from L-rhamnose: step 2/3. Its function is as follows. Involved in the catabolism of L-rhamnose (6-deoxy-L-mannose). Catalyzes the transfer of the gamma-phosphate group from ATP to the 1-hydroxyl group of L-rhamnulose to yield L-rhamnulose 1-phosphate. The polypeptide is Rhamnulokinase (Escherichia coli O157:H7).